Here is a 333-residue protein sequence, read N- to C-terminus: Cap-specific mRNA (nucleoside-2'-O-)-methyltransferase (333 aa).

Residue tyrosine 22 participates in mRNA binding. 8 residues coordinate S-adenosyl-L-methionine: glutamine 39, tyrosine 66, glycine 68, glycine 72, aspartate 95, arginine 97, valine 116, and aspartate 138. Positions proline 169–isoleucine 249 are binding to NPH-I. Lysine 175 serves as the catalytic For methyltransferase activity. Residues arginine 177–phenylalanine 180, aspartate 182, serine 205–glutamate 207, and glutamate 233 contribute to the mRNA site. Basic and acidic residues predominate over residues serine 305–serine 320. The interval serine 305–lysine 333 is disordered. The span at arginine 323–lysine 333 shows a compositional bias: basic residues.

The protein belongs to the class I-like SAM-binding methyltransferase superfamily. Poxvirus/kinetoplastid 2'-O-MTase family. In terms of assembly, interacts with poly(A) polymerase catalytic subunit OPG063. Interacts with OPG109 and OPG123; these interactions might help linking transcription to capping and polyadenylation.

Its subcellular location is the virion. It carries out the reaction a 5'-end (N(7)-methyl 5'-triphosphoguanosine)-ribonucleoside in mRNA + S-adenosyl-L-methionine = a 5'-end (N(7)-methyl 5'-triphosphoguanosine)-(2'-O-methyl-ribonucleoside) in mRNA + S-adenosyl-L-homocysteine + H(+). Functionally, displays methyltransferase, positive regulation of the poly(A) polymerase and transcription elongation activities. Involved in the modification of both mRNA ends and in intermediate and late gene positive transcription elongation. At the mRNAs 5' end, methylates the ribose 2' OH group of the first transcribed nucleotide, thereby producing a 2'-O-methylpurine cap. At the 3' end, functions as a processivity factor which stimulates the activity of the viral poly(A) polymerase OPG063 that creates mRNA's poly(A) tail. In the presence of OPG102, OPG063 does not dissociate from the RNA allowing tail elongation to around 250 adenylates. The protein is Cap-specific mRNA (nucleoside-2'-O-)-methyltransferase (OPG102) of Cynomys gunnisoni (Gunnison's prairie dog).